A 367-amino-acid chain; its full sequence is Probable peptidoglycan glycosyltransferase FtsW (367 aa).

Helical transmembrane passes span 32-52 (LIFI…PMKF), 57-77 (AFWG…PGIG), 87-107 (IPIG…MIVF), 119-139 (IHGL…CFLL), 149-169 (MVVV…FALF), 171-191 (LLFL…PWRM), 251-271 (VVGE…FVLL), 296-316 (GVVV…FGVF), and 323-343 (LPFI…FGLL).

The protein belongs to the SEDS family. FtsW subfamily.

It is found in the cell inner membrane. It catalyses the reaction [GlcNAc-(1-&gt;4)-Mur2Ac(oyl-L-Ala-gamma-D-Glu-L-Lys-D-Ala-D-Ala)](n)-di-trans,octa-cis-undecaprenyl diphosphate + beta-D-GlcNAc-(1-&gt;4)-Mur2Ac(oyl-L-Ala-gamma-D-Glu-L-Lys-D-Ala-D-Ala)-di-trans,octa-cis-undecaprenyl diphosphate = [GlcNAc-(1-&gt;4)-Mur2Ac(oyl-L-Ala-gamma-D-Glu-L-Lys-D-Ala-D-Ala)](n+1)-di-trans,octa-cis-undecaprenyl diphosphate + di-trans,octa-cis-undecaprenyl diphosphate + H(+). The protein operates within cell wall biogenesis; peptidoglycan biosynthesis. Functionally, peptidoglycan polymerase that is essential for cell division. The protein is Probable peptidoglycan glycosyltransferase FtsW of Taylorella equigenitalis (strain MCE9).